A 260-amino-acid polypeptide reads, in one-letter code: Exosome complex component Rrp42 (260 aa).

The protein belongs to the RNase PH family. Rrp42 subfamily. Component of the archaeal exosome complex. Forms a hexameric ring-like arrangement composed of 3 Rrp41-Rrp42 heterodimers. The hexameric ring associates with a trimer of Rrp4 and/or Csl4 subunits.

The protein localises to the cytoplasm. Its function is as follows. Non-catalytic component of the exosome, which is a complex involved in RNA degradation. Contributes to the structuring of the Rrp41 active site. The protein is Exosome complex component Rrp42 of Methanocella arvoryzae (strain DSM 22066 / NBRC 105507 / MRE50).